The chain runs to 331 residues: Cytoplasmic envelopment protein 1 (331 aa).

This sequence belongs to the herpesviridae cytoplasmic envelopment protein 1 family. Interacts with protein ORF7; this interaction localizes protein ORF53 to the host trans-Golgi network (TGN).

It localises to the virion. Its subcellular location is the virion tegument. The protein resides in the host cytoplasm. The protein localises to the host Golgi apparatus. Functionally, plays a critical role in cytoplasmic virus egress. Participates in the final step of tegumentation and envelope acquisition within the host cytoplasm. The sequence is that of Cytoplasmic envelopment protein 1 (ORF53) from Varicella-zoster virus (strain Dumas) (HHV-3).